Here is a 272-residue protein sequence, read N- to C-terminus: NH(3)-dependent NAD(+) synthetase (272 aa).

45-52 (GISGGQDS) provides a ligand contact to ATP. Mg(2+) is bound at residue aspartate 51. Arginine 138 serves as a coordination point for deamido-NAD(+). Residue threonine 158 participates in ATP binding. Mg(2+) is bound at residue glutamate 163. Residues lysine 171 and aspartate 178 each coordinate deamido-NAD(+). ATP-binding residues include lysine 187 and threonine 209. 258–259 (HK) lines the deamido-NAD(+) pocket.

It belongs to the NAD synthetase family. In terms of assembly, homodimer.

It catalyses the reaction deamido-NAD(+) + NH4(+) + ATP = AMP + diphosphate + NAD(+) + H(+). It participates in cofactor biosynthesis; NAD(+) biosynthesis; NAD(+) from deamido-NAD(+) (ammonia route): step 1/1. In terms of biological role, catalyzes the ATP-dependent amidation of deamido-NAD to form NAD. Uses ammonia as a nitrogen source. This Bacillus cereus (strain ATCC 14579 / DSM 31 / CCUG 7414 / JCM 2152 / NBRC 15305 / NCIMB 9373 / NCTC 2599 / NRRL B-3711) protein is NH(3)-dependent NAD(+) synthetase.